Consider the following 151-residue polypeptide: Large ribosomal subunit protein bL9 (151 aa).

Belongs to the bacterial ribosomal protein bL9 family.

Binds to the 23S rRNA. This chain is Large ribosomal subunit protein bL9, found in Francisella tularensis subsp. novicida (strain U112).